The chain runs to 167 residues: uncharacterized protein (167 aa).

The tract at residues 95-114 (AHSLHHQSHQSDVQVHAKGN) is disordered.

This is an uncharacterized protein from Haemophilus influenzae (Bacteriophage HP1).